Reading from the N-terminus, the 469-residue chain is MYHIDFTKPIHVHFIGIGGISMSGLAELLHTKGFTVSGSDAKDSKIVDRLRHLGITIFIGQKAENITEDIDLVVYTAAVKSDNVEYQAVQKHNIPMLDRADFLGQVMLQYKNAIGVSGTHGKTTTTSMVSLMMLEGNFDPTISVGGILDNIEGNIRIGHSENFIVESCEYKNSFLSFNPAHAIILNIEAEHLDFFKDIEDIRTSFHTFAKKLPDYGNLVVWGGIDRYEELIEDLSCNVITYGMFSSEEEREQNKDRYDYAACNVTSDDFGLRSYDLYKHGKFVDRINLAVIGDHNVLNSLAAISLVDTLGGTMSAIKKALLAYKGTERRFERKGVLNGITIVDDYAHHPSEIKATLIAAASYPHKDIWCVFQPHTYTRTKSFFHDFTTALALADKIVLADIYAAREENPGDISSKDIQNELLKIGKEAYYISDFAEIEKFLLEHCTNGDLLITMGAGDVVSIGESLLQK.

G118 to T124 provides a ligand contact to ATP.

The protein belongs to the MurCDEF family.

The protein resides in the cytoplasm. The catalysed reaction is UDP-N-acetyl-alpha-D-muramate + L-alanine + ATP = UDP-N-acetyl-alpha-D-muramoyl-L-alanine + ADP + phosphate + H(+). Its pathway is cell wall biogenesis; peptidoglycan biosynthesis. In terms of biological role, cell wall formation. The chain is UDP-N-acetylmuramate--L-alanine ligase from Lachnoclostridium phytofermentans (strain ATCC 700394 / DSM 18823 / ISDg) (Clostridium phytofermentans).